Consider the following 200-residue polypeptide: MEDKKKKRSPKPCLTQPAQAPGTLRRVPVPTSHSGSLALGLPHLPSPKQRAKFKRAGKEKCRPVLAGGGGGSAGTPLQHSFLTEVTDVYEMEGGLLNLLNDFHSGRLQAFGKECSFEQLEHVREMQEKLARLHFSLDVCGEEEDEEEEEDGVTEGLPEEQKKTMADRNLDQLLSNLEDLSNSIQKLHLAENAEPEDQPAA.

At Met-1 the chain carries N-acetylmethionine. Basic residues predominate over residues Met-1–Pro-10. The disordered stretch occupies residues Met-1 to Gln-49. A phosphoserine mark is found at Ser-46 and Ser-115. A compositionally biased stretch (acidic residues) spans Gly-140–Val-152. The disordered stretch occupies residues Gly-140 to Ala-165. The stretch at Glu-158–Ala-189 forms a coiled coil.

As to quaternary structure, interacts with BBS1, BBS2, BBS4, BBS5, BBS6, BBS7 and TTC8/BBS8. Interacts with MAPKAP1/SIN1 isoform 1 and RICTOR. In terms of tissue distribution, expressed in the retina, pericardium and limb epithelium.

The protein localises to the cytoplasm. It is found in the cytoskeleton. The protein resides in the microtubule organizing center. Its subcellular location is the centrosome. Functionally, involved in ciliogenesis. Regulates cilia length through its interaction with MAPKAP1/SIN1 but independently of mTORC2 complex. Modulates mTORC2 complex assembly and function, possibly enhances AKT1 phosphorylation. Does not seem to modulate assembly and function of mTORC1 complex. This Mus musculus (Mouse) protein is Coiled-coil domain-containing protein 28B (Ccdc28b).